The chain runs to 66 residues: Panusin (66 aa).

The first 22 residues, 1 to 22 (MKTKAVLMLMLLVLVAATLVQG), serve as a signal peptide directing secretion. The propeptide occupies 23–26 (EPEP). Cystine bridges form between cysteine 32–cysteine 54, cysteine 39–cysteine 61, and cysteine 44–cysteine 60. A Tyrosine amide modification is found at tyrosine 65.

Forms dimers and higher-order oligomers. Post-translationally, contains 3 disulfide bonds.

Antimicrobial peptide. Has antibacterial activity against Gram-positive bacteria S.aureus ATCC 29737 and B.subtilis ATCC 6633 as well as against Gram-negative bacteria E.coli ATCC 10536 and K.pneumoniae ATCC 10031. The polypeptide is Panusin (Panulirus argus (Caribbean spiny lobster)).